The following is a 552-amino-acid chain: Arginine--tRNA ligase (552 aa).

Residues 129–139 (ANPTGPVTLAS) carry the 'HIGH' region motif.

The protein belongs to the class-I aminoacyl-tRNA synthetase family. Monomer.

The protein resides in the cytoplasm. It carries out the reaction tRNA(Arg) + L-arginine + ATP = L-arginyl-tRNA(Arg) + AMP + diphosphate. The chain is Arginine--tRNA ligase from Frankia alni (strain DSM 45986 / CECT 9034 / ACN14a).